A 384-amino-acid chain; its full sequence is MRRDQAQRPIIIAAGGTGGHFFPAEALAAELKRRGRQIVLMTDARSGGLTSTVFADTDRFVLPGAGIAGRGIRRAGQAVIALGHGVVKAGALLRRLEAGCIVGFGGYPCIPPVLGARLRARNVPVILHEQNAVLGRANRLLARKIHCLALSFASTSHVPAGTRTLVTGNPVRPAIAALAGTSYTPPGTEGVINLLILGGSLGARVLSDVVPAALALLPPALRQRMRVTQQCRAEDIDRVRMAYAACGIEAILAPFFTDVATLIADAHLVIARAGASTVAELATIGRPAIMVPLPGAIDDHQTANARILVDAQGGWMIRQPDFTPDTLAARIAGLLAEPGTLADAARNAARLGMQDAVARLADTVEQSLDTARAPQGDFKGEIKS.

Residues 17 to 19 (TGG), Asn-131, Arg-172, Ser-200, and Gln-301 each bind UDP-N-acetyl-alpha-D-glucosamine.

Belongs to the glycosyltransferase 28 family. MurG subfamily.

It is found in the cell inner membrane. The catalysed reaction is di-trans,octa-cis-undecaprenyl diphospho-N-acetyl-alpha-D-muramoyl-L-alanyl-D-glutamyl-meso-2,6-diaminopimeloyl-D-alanyl-D-alanine + UDP-N-acetyl-alpha-D-glucosamine = di-trans,octa-cis-undecaprenyl diphospho-[N-acetyl-alpha-D-glucosaminyl-(1-&gt;4)]-N-acetyl-alpha-D-muramoyl-L-alanyl-D-glutamyl-meso-2,6-diaminopimeloyl-D-alanyl-D-alanine + UDP + H(+). It participates in cell wall biogenesis; peptidoglycan biosynthesis. Functionally, cell wall formation. Catalyzes the transfer of a GlcNAc subunit on undecaprenyl-pyrophosphoryl-MurNAc-pentapeptide (lipid intermediate I) to form undecaprenyl-pyrophosphoryl-MurNAc-(pentapeptide)GlcNAc (lipid intermediate II). In Granulibacter bethesdensis (strain ATCC BAA-1260 / CGDNIH1), this protein is UDP-N-acetylglucosamine--N-acetylmuramyl-(pentapeptide) pyrophosphoryl-undecaprenol N-acetylglucosamine transferase.